Consider the following 291-residue polypeptide: uncharacterized protein (291 aa).

The region spanning 2–62 (KEKEKLIIET…SMLNYYYDKT (61 aa)) is the HTH tetR-type domain. The H-T-H motif DNA-binding region spans 25-44 (SVQEIAKECKISKGAFYIYF).

This is an uncharacterized protein from Bacillus subtilis (strain 168).